A 201-amino-acid chain; its full sequence is Myosin regulatory light chain 2 (201 aa).

The segment at 1–48 is disordered; that stretch reads MADKDKKVKKKKAKEDAPAEEAPAAAAPAGDRQSSRGSRKAKRTGSNV. Low complexity predominate over residues 20–29; the sequence is EEAPAAAAPA. Residue serine 46 is modified to Phosphoserine. 3 consecutive EF-hand domains span residues 55–90, 125–158, and 159–194; these read KQVA…LGRL, DEDD…WGDK, and FSAD…SAEE. 4 residues coordinate Ca(2+): aspartate 68, aspartate 70, aspartate 72, and aspartate 79.

In terms of assembly, myosin is a hexamer of 2 heavy chains and 4 light chains.

The chain is Myosin regulatory light chain 2 from Bombyx mori (Silk moth).